The primary structure comprises 326 residues: Toluene-4-monooxygenase system, ferredoxin--NAD(+) reductase component (326 aa).

The region spanning 1–92 (MFNIQSDDLL…DLKIKVINRA (92 aa)) is the 2Fe-2S ferredoxin-type domain. The [2Fe-2S] cluster site is built by Cys36, Cys41, Cys44, and Cys76. A ferredoxin-reductase region spans residues 95–326 (RASHPPKRFS…FEAIHFDRFF (232 aa)). In terms of domain architecture, FAD-binding FR-type spans 100–195 (PKRFSTRVVS…DGPYGLSVLK (96 aa)). FAD-binding positions include 146–149 (RAYS), 162–164 (IVK), and 170–172 (KVS).

The protein belongs to the bacterial ring-hydroxylating dioxygenase ferredoxin reductase family. Monomer. The alkene monooxygenase multicomponent enzyme system is composed of an electron transfer component and a monooxygenase component interacting with the effector protein TmoD. The electron transfer component is composed of a ferredoxin reductase (TmoF) and a ferredoxin (TmoC), and the monooxygenase component is formed by a heterohexamer (dimer of heterotrimers) of two alpha subunits (TmoA), two beta subunits (TmoE) and two gamma subunits (TmoB). Requires FAD as cofactor. It depends on [2Fe-2S] cluster as a cofactor.

The catalysed reaction is 2 reduced [2Fe-2S]-[ferredoxin] + NAD(+) + H(+) = 2 oxidized [2Fe-2S]-[ferredoxin] + NADH. Its pathway is xenobiotic degradation; toluene degradation. Functionally, reductase component of the toluene-4-monooxygenase multicomponent enzyme system which catalyzes the O2- and NADH-dependent hydroxylation of toluene to form p-cresol. Ferredoxin reductase catalyzes the transfer of electrons from NADH to ferredoxin (TmoC). The sequence is that of Toluene-4-monooxygenase system, ferredoxin--NAD(+) reductase component from Ectopseudomonas mendocina (Pseudomonas mendocina).